The primary structure comprises 2280 residues: Genome polyprotein (2280 aa).

In terms of domain architecture, SF3 helicase spans 454–608 (ETQANNIRST…EEWKKRNPGK (155 aa)). ATP is bound at residue 480 to 487 (GAPGIGKT). Tyr965 carries the O-(5'-phospho-RNA)-tyrosine modification. In terms of domain architecture, Peptidase C24 spans 1054 to 1202 (APTAIVEFTQ…TKVAQRVVKE (149 aa)). Residues His1084, Glu1105, and Cys1169 each act as for 3CLpro activity in the active site. One can recognise a RdRp catalytic domain in the interval 1442-1567 (GVLYCLDYSK…SVCPATASIF (126 aa)). Residues 1722–1746 (GNGSNPEPKQSNNPMVVDPPGTTGP) form a disordered region. Polar residues predominate over residues 1723–1735 (NGSNPEPKQSNNP).

As to quaternary structure, homodimer. Homomultimer. In terms of processing, specific enzymatic cleavages in vivo yield mature proteins. Pro-Pol is first autocatalytically cleaved, then processes the whole polyprotein. VPg is uridylylated by the polymerase and is covalently attached to the 5'-end of the polyadenylated genomic and subgenomic RNAs. This uridylylated form acts as a nucleotide-peptide primer for the polymerase.

The protein localises to the virion. It is found in the host cytoplasm. It catalyses the reaction a ribonucleoside 5'-triphosphate + H2O = a ribonucleoside 5'-diphosphate + phosphate + H(+). The enzyme catalyses RNA(n) + a ribonucleoside 5'-triphosphate = RNA(n+1) + diphosphate. The catalysed reaction is Endopeptidase with a preference for cleavage when the P1 position is occupied by Glu-|-Xaa and the P1' position is occupied by Gly-|-Yaa.. Together with NTPase and NS4, initiates the formation of the replication complex. Induces the proliferation of the host smooth ER membranes forming long tubular structures. These remodeled membranes probably form the viral factories that contain the replication complex. Functionally, displays NTPase activity, but no helicase activity. Induces the formation of convoluted membranes derived from the host ER. These remodeled membranes probably form the viral factories that contain the replication complex. Together with NS2 and NS4, initiates the formation of the replication complex. In terms of biological role, probable key protein responsible for the formation of membrane alterations by the virus. Induces the formation of convoluted membranes derived from the host ER. These remodeled membranes probably form the viral factories that contain the replication complex. Together with NS2 and NTPase, initiates the formation of the replication complex. Its function is as follows. Viral genome-linked protein is covalently linked to the 5'-end of the positive-strand, negative-strand genomic RNAs and subgenomic RNA. Acts as a genome-linked replication primer. May recruit ribosome to viral RNA thereby promoting viral proteins translation. Interacts with host translation initiation complex to allow the translation of viral proteins. Protease-polymerase p76 processes the polyprotein: Pro-Pol is first released by autocleavage, then all other proteins are cleaved. Cleaves host translation initiation factor eIF4G1, eIF4G2 and PABP1 thereby inducing a shutdown of host protein synthesis. This shutdown may not prevent viral mRNA from being translated since viral Vpg replaces the cap. It is also an RNA-directed RNA polymerase which replicates genomic and antigenomic viral RNA by recognizing specific signals. Also transcribes a subgenomic mRNA by initiating RNA synthesis internally on antigenomic RNA. This sgRNA codes for structural proteins. Catalyzes the covalent attachment VPg with viral RNAs. Functionally, capsid protein self assembles to form an icosahedral capsid with a T=3 symmetry, about 38 nm in diameter, and consisting of 180 capsid proteins. The capsid encapsulate the genomic RNA and VP2 proteins. Attaches virion to target cells, inducing endocytosis of the viral particle. Acidification of the endosome induces conformational change of capsid protein thereby injecting virus genomic RNA into host cytoplasm. The protein is Genome polyprotein of Sapporo virus (isolate GI/Human/Germany/pJG-Sap01) (Hu/Dresden/pJG-Sap01/DE).